The chain runs to 471 residues: Glutamate--tRNA ligase 2 (471 aa).

The short motif at 15–25 (PSPTGYLHIGG) is the 'HIGH' region element. Positions 243–247 (KLSKR) match the 'KMSKS' region motif. Residue K246 coordinates ATP.

It belongs to the class-I aminoacyl-tRNA synthetase family. Glutamate--tRNA ligase type 1 subfamily. Monomer.

The protein resides in the cytoplasm. It carries out the reaction tRNA(Glu) + L-glutamate + ATP = L-glutamyl-tRNA(Glu) + AMP + diphosphate. Catalyzes the attachment of glutamate to tRNA(Glu) in a two-step reaction: glutamate is first activated by ATP to form Glu-AMP and then transferred to the acceptor end of tRNA(Glu). The sequence is that of Glutamate--tRNA ligase 2 from Cereibacter sphaeroides (strain ATCC 17025 / ATH 2.4.3) (Rhodobacter sphaeroides).